The primary structure comprises 281 residues: BURP domain-containing protein BNM2C (281 aa).

Positions 1–25 are cleaved as a signal peptide; sequence MASLRFSVTFPALFSLLLSLWVVDA. The region spanning 59-281 is the BURP domain; it reads FFKISDLKLG…PLDNIVWVSK (223 aa).

As to expression, expressed in the radicle of germinating seeds 2 days post-imbibition (DPI) and in roots of 30-DPI young plants. Expressed in the embryo and seed coat tissues of developing seeds. The protein accumulates only in seeds and only long after transcript accumulation becomes evident.

The protein localises to the protein storage vacuole. The chain is BURP domain-containing protein BNM2C from Brassica napus (Rape).